A 418-amino-acid chain; its full sequence is F-box/kelch-repeat protein SKIP20 (418 aa).

An F-box domain is found at 14 to 61; it reads DLIPGLPEELAIECLVRVPFQFHSSIKSVCRSWKCVISSRSFIKERIG. The disordered stretch occupies residues 79–104; sequence PSPAMMEGGEMSQKKKEEEEGESQMT. 4 Kelch repeats span residues 104 to 150, 153 to 206, 208 to 255, and 258 to 314; these read TQQL…AIQD, KVLL…SVGS, KVYV…SMAT, and GFCV…EFPG.

In terms of assembly, part of a SCF (ASK-cullin-F-box) protein ligase complex. Interacts with SKP1A/ASK1 and SPK1B/ASK2.

It localises to the nucleus. It functions in the pathway protein modification; protein ubiquitination. In terms of biological role, component of SCF(ASK-cullin-F-box) E3 ubiquitin ligase complexes, which may mediate the ubiquitination and subsequent proteasomal degradation of target proteins. This Arabidopsis thaliana (Mouse-ear cress) protein is F-box/kelch-repeat protein SKIP20 (SKIP20).